Consider the following 360-residue polypeptide: Phenylalanine--tRNA ligase alpha subunit (360 aa).

Glutamate 260 provides a ligand contact to Mg(2+).

Belongs to the class-II aminoacyl-tRNA synthetase family. Phe-tRNA synthetase alpha subunit type 1 subfamily. In terms of assembly, tetramer of two alpha and two beta subunits. It depends on Mg(2+) as a cofactor.

It localises to the cytoplasm. It carries out the reaction tRNA(Phe) + L-phenylalanine + ATP = L-phenylalanyl-tRNA(Phe) + AMP + diphosphate + H(+). In Bradyrhizobium diazoefficiens (strain JCM 10833 / BCRC 13528 / IAM 13628 / NBRC 14792 / USDA 110), this protein is Phenylalanine--tRNA ligase alpha subunit.